The primary structure comprises 165 residues: MRTPIVEKVIVHMGVGESGQHLVNAEDILRNITGQEVVRCFAKRTLPAFSIKKNEPIGCKVTLRGQKAQEFLETALGIVEKTLNRSQFDSFGNVSFGIEEHTDFPGMRYDPNIGVFGMDVTVVLKRPGERICKRRIAARKIPAGHRVTVDDAIAFLNESYGVEVM.

The protein belongs to the universal ribosomal protein uL5 family. Part of the 50S ribosomal subunit; contacts the 5S rRNA and probably tRNA. Forms a bridge to the 30S subunit in the 70S ribosome.

Its function is as follows. This is one of the proteins that bind and probably mediate the attachment of the 5S RNA into the large ribosomal subunit, where it forms part of the central protuberance. In the 70S ribosome it contacts protein S13 of the 30S subunit (bridge B1b), connecting the 2 subunits; this bridge is implicated in subunit movement. May contact the P site tRNA; the 5S rRNA and some of its associated proteins might help stabilize positioning of ribosome-bound tRNAs. This is Large ribosomal subunit protein uL5 from Methanosarcina acetivorans (strain ATCC 35395 / DSM 2834 / JCM 12185 / C2A).